The following is a 498-amino-acid chain: ATP synthase subunit beta, chloroplastic (498 aa).

Position 172-179 (172-179) interacts with ATP; the sequence is GGAGVGKT.

This sequence belongs to the ATPase alpha/beta chains family. F-type ATPases have 2 components, CF(1) - the catalytic core - and CF(0) - the membrane proton channel. CF(1) has five subunits: alpha(3), beta(3), gamma(1), delta(1), epsilon(1). CF(0) has four main subunits: a(1), b(1), b'(1) and c(9-12).

It is found in the plastid. The protein resides in the chloroplast thylakoid membrane. It carries out the reaction ATP + H2O + 4 H(+)(in) = ADP + phosphate + 5 H(+)(out). Its function is as follows. Produces ATP from ADP in the presence of a proton gradient across the membrane. The catalytic sites are hosted primarily by the beta subunits. This chain is ATP synthase subunit beta, chloroplastic, found in Calamus usitatus (Palm tree).